Consider the following 995-residue polypeptide: Aconitate hydratase 2, mitochondrial (995 aa).

The N-terminal 83 residues, 1-83, are a transit peptide targeting the mitochondrion; sequence MYRRATSGVR…PASLRAQARN (83 aa). Substrate contacts are provided by residues Gln-187 and 306–308; that span reads DSH. Residues Cys-538, Cys-604, and Cys-607 each contribute to the [4Fe-4S] cluster site. Substrate contacts are provided by residues Arg-637, Arg-642, Arg-800, and 881–882; that span reads SR.

It belongs to the aconitase/IPM isomerase family. Monomer. Requires [4Fe-4S] cluster as cofactor. In terms of tissue distribution, mostly expressed in roots, leaves and flowers, also present in stems, and, at low levels, in seeds.

The protein localises to the mitochondrion. It carries out the reaction citrate = D-threo-isocitrate. Its pathway is carbohydrate metabolism; tricarboxylic acid cycle; isocitrate from oxaloacetate: step 2/2. In terms of biological role, catalyzes the isomerization of citrate to isocitrate via cis-aconitate. Contributes to oxidative stress tolerance. Involved in acetate assimilation. The polypeptide is Aconitate hydratase 2, mitochondrial (Arabidopsis thaliana (Mouse-ear cress)).